We begin with the raw amino-acid sequence, 128 residues long: Prokineticin-2 (128 aa).

The N-terminal stretch at 1–26 is a signal peptide; it reads MGDPRCAPLLLLLLLPLLFTPPAGDA. Disulfide bonds link cysteine 33–cysteine 45, cysteine 39–cysteine 57, cysteine 44–cysteine 106, cysteine 67–cysteine 114, and cysteine 108–cysteine 124.

Belongs to the AVIT (prokineticin) family. As to expression, expressed in the SCN and among a few other discrete brain areas, including the islands of Calleja, media l preoptic area of the hypothalamus and the shell of the nucleus accumbens. Highly expressed in testis. In the SCN, expression subjected to high amplitude of circadian oscillation.

It is found in the secreted. Functionally, may function as an output molecule from the suprachiasmatic nucleus (SCN) that transmits behavioral circadian rhythm. May also function locally within the SCN to synchronize output. Potently contracts gastrointestinal (GI) smooth muscle. This is Prokineticin-2 (Prok2) from Mus musculus (Mouse).